A 187-amino-acid chain; its full sequence is uncharacterized protein (187 aa).

In terms of domain architecture, HTH tetR-type spans 6-66; it reads TDLAEQIFSA…QFAHRVFSMF (61 aa). Residues 29-48 constitute a DNA-binding region (H-T-H motif); sequence SMLKLAKEANVAAGTIYLYF.

This is an uncharacterized protein from Haemophilus influenzae (strain ATCC 51907 / DSM 11121 / KW20 / Rd).